The chain runs to 1823 residues: MDHITMEEKINKKTKHIFSNNYDNILSDKQVQCIYKEFFNNNKDNNNNKRFNENGNQINQIDFNSNKEEEKEEKEEKEKEEDEDNITILDDVYYSLEYDFEDYIKYSKILTEKIEKERITQLFEQEKQNRLIRYHQRIQQQKVIKEQLNVNMELLEKRKLLETELSLKSNQLNQCQTQLQQFQSTMTLLQSQHQQTINKLKQTQSEQLQKRRNQQHQNLLKKQKIQKEKEEREQKEKEQKEKEQKEKEEQQQQLFLLQQQQQQEEESKTTNKKKRNSRTTSINRVFRSLLTDVKVPAKKFNGLKSEAQEEMYDQLDTVLNQLKDYSDHSFPFLTKVRPSEAPNYYEIIKKPMDLSLMTKKLKKLEYQSKFEFQLDLNLIFTNCRIYNTDPSGKVYVEHANKMEKKSKDLMKNVKDLDFSMDILKDIVDENKNNNNSNNSVDNNNSLKKGRTSTPNKKQKTSNSTTTTTTTTTTTTATTPNLLNTPLSSPPYTPCSPSTISTVSSTPTTPQSADCPLSPFQQQQQQQTQAQQQPTSNSPRNTTTTTTTITSPISPRETNKDVIMEEEEESSSSSLSSSSLALNSQNENGVNKSIEDSTGVKMESEESTNVKKEENQSGDCENQTTTTTTKEEGEEQQEQEDEEQQQQQQQQEEQTLEIENEEDIINNFNSEIESLNNDFSEKTLQLSIQIKEISEKTEHFKINNSKIQQNLDELPLADKLNLDINNAKELVDDNIELDDSEIIIPPYLNNNNNNCNNNNNNNDNNNNNNIDNDNDNNNNNSLENSFEIEKSKKINKFKELTKENRVRKLKYFLDQQSLPFNKREAFIRTPYFMNTFYNLDLQQQNQKQQQIFNQEINDNDDDNNNNNNNNNNNNNNNNNNNNNNNKPKVMSAIQKMDQDFMDLKVGFFPELTHLSNSIPIITPNYPITCKNSSIDNSVTTPSKSLLRLLNSSKSNNNSNNKKEKQCNYNREGEDDEGRGEEQKEKEEEKEDEDFPNIITNDIAYILLSKSIAKSIESESCLHGTTQETMLIFTDIVSSFIGKIGKLFNKYYSNNGLPNNKSTTTQTTPTTQLQPPPPPPSLSLPPSLLLNSIVTDIFGDSLGILLLKDYMIKKSKNQQIYDDPLFELEVEFENDHLQSDNILQNNNGDIDINESMEIDILGEDDIIDIDDTGLFGHYPRYIEEPAEITLFIDPKPIQKPTTNTTTNNNNNNNNNNNNNNNNNNNNNNNNNNNNNNNNNNNNNNNNNNSNSNNNNNNNNSNSNNNNNNNNNNNNNNNNNNNNNNNNNNNNNNNNNNSINNNNHNNNNNNNNNINNNNNNNNNNNNNNNNNNNINNNNNNNINNNNNNINNYNNNYNNNNNNNNNNNNNNNNNNNNNNNNNYPKPIQASTQTGNLGIQQQLQQQQLHQLQQQQQLQQQYQIQQQQLHLQQQQQQQQQLKLQQIQFQQMQQQQQQQQLQQQTRQPSQPQTPQMQSQPQTPQILSQPQQQLQQLQQQQLQQQQQLQQQQLQQQQLFQQQQQQQQQQQQQQQQQQQQQQQQQQLLHPQQMQIQQNLQQPLQQIQQQQQIQQQQQQQLQQQQQQQQQQQQQQQQQQQQQQQQQQQQQHHQQLQQLQPQQQQQLQQLQPQQLQQLQQLQQLQQLQQLQQLQPQQLQQLQQLQQLQPQQLQQPQQLQPQQLQQQQLQQQQQPQQQQQQPQQQPQQQPQQQQQPQYQTTFQSIASPKEKDKEREKEKEREREKEKDRKFKKVKKTESKKESKKSLNDSSNSDINTSVEQHSPLSPQPISSSKPTPPPVSSKQPQTTQSNTTTTQDSIPPIEQKKKRGRPQKKQ.

Disordered regions lie at residues 44–83 (DNNN…EEDE) and 200–281 (LKQT…RTTS). Over residues 65 to 77 (SNKEEEKEEKEEK) the composition is skewed to basic and acidic residues. Basic residues predominate over residues 210–224 (KRRNQQHQNLLKKQK). Residues 225–250 (IQKEKEEREQKEKEQKEKEQKEKEEQ) are compositionally biased toward basic and acidic residues. Low complexity predominate over residues 251–262 (QQQLFLLQQQQQ). The region spanning 306–413 (EAQEEMYDQL…KKSKDLMKNV (108 aa)) is the Bromo domain. Disordered regions lie at residues 429–654 (ENKN…EEQT), 753–781 (NCNN…NNSL), 855–886 (INDN…NNKP), 949–993 (NSSK…DEDF), 1055–1079 (LPNN…PPPS), 1190–1386 (IDPK…IQAS), 1453–1477 (QLQQ…QTPQ), and 1679–1823 (QQQQ…QKKQ). Composition is skewed to low complexity over residues 432-486 (NNNN…NTPL), 494-511 (CSPS…TPQS), 520-555 (QQQQ…ISPR), and 570-579 (SSSSLSSSSL). Residues 580–590 (ALNSQNENGVN) show a composition bias toward polar residues. The segment covering 601 to 614 (MESEESTNVKKEEN) has biased composition (basic and acidic residues). Acidic residues predominate over residues 631–643 (EGEEQQEQEDEEQ). 5 stretches are compositionally biased toward low complexity: residues 753-779 (NCNN…NNNN), 863-884 (NNNN…NNNN), 949-958 (NSSKSNNNSN), 1055-1071 (LPNN…TTQL), and 1205-1378 (NNNN…NNNN). The segment covering 1679–1705 (QQQQPQQQQQQPQQQPQQQPQQQQQPQ) has biased composition (low complexity). Composition is skewed to basic and acidic residues over residues 1716-1737 (PKEK…EKDR) and 1744-1755 (KTESKKESKKSL). 2 stretches are compositionally biased toward low complexity: residues 1756–1767 (NDSSNSDINTSV) and 1789–1806 (SSKQ…TQDS). Residues 1813–1823 (KKKRGRPQKKQ) are compositionally biased toward basic residues.

The sequence is that of Bromodomain-containing protein DDB_G0280777 from Dictyostelium discoideum (Social amoeba).